Consider the following 378-residue polypeptide: Glutamate 5-kinase 1 (378 aa).

Residue K13 coordinates ATP. 3 residues coordinate substrate: S53, D140, and N152. 172 to 173 (SD) is a binding site for ATP. The PUA domain occupies 278–355 (AGRLTVDAGA…AEIETVLGYE (78 aa)).

This sequence belongs to the glutamate 5-kinase family.

The protein resides in the cytoplasm. It carries out the reaction L-glutamate + ATP = L-glutamyl 5-phosphate + ADP. It functions in the pathway amino-acid biosynthesis; L-proline biosynthesis; L-glutamate 5-semialdehyde from L-glutamate: step 1/2. Functionally, catalyzes the transfer of a phosphate group to glutamate to form L-glutamate 5-phosphate. This Mesorhizobium japonicum (strain LMG 29417 / CECT 9101 / MAFF 303099) (Mesorhizobium loti (strain MAFF 303099)) protein is Glutamate 5-kinase 1.